A 429-amino-acid chain; its full sequence is 3-phosphoshikimate 1-carboxyvinyltransferase (429 aa).

The 3-phosphoshikimate site is built by K11, S12, and R16. Phosphoenolpyruvate is bound at residue K11. 2 residues coordinate phosphoenolpyruvate: G82 and R110. 3-phosphoshikimate is bound by residues S155, Q157, D302, and K329. Q157 lines the phosphoenolpyruvate pocket. Residue D302 is the Proton acceptor of the active site. Positions 333 and 385 each coordinate phosphoenolpyruvate.

It belongs to the EPSP synthase family. As to quaternary structure, monomer.

The protein resides in the cytoplasm. The catalysed reaction is 3-phosphoshikimate + phosphoenolpyruvate = 5-O-(1-carboxyvinyl)-3-phosphoshikimate + phosphate. It participates in metabolic intermediate biosynthesis; chorismate biosynthesis; chorismate from D-erythrose 4-phosphate and phosphoenolpyruvate: step 6/7. Functionally, catalyzes the transfer of the enolpyruvyl moiety of phosphoenolpyruvate (PEP) to the 5-hydroxyl of shikimate-3-phosphate (S3P) to produce enolpyruvyl shikimate-3-phosphate and inorganic phosphate. The sequence is that of 3-phosphoshikimate 1-carboxyvinyltransferase from Helicobacter pylori (strain G27).